We begin with the raw amino-acid sequence, 294 residues long: Acetyl-coenzyme A carboxylase carboxyl transferase subunit beta (294 aa).

A CoA carboxyltransferase N-terminal domain is found at 25-294 (IWTKCDNCGQ…PKVDYRHCVE (270 aa)). Zn(2+) contacts are provided by cysteine 29, cysteine 32, cysteine 48, and cysteine 51. The C4-type zinc finger occupies 29–51 (CDNCGQLLYKKELERNLEVCPKC).

This sequence belongs to the AccD/PCCB family. As to quaternary structure, acetyl-CoA carboxylase is a heterohexamer composed of biotin carboxyl carrier protein (AccB), biotin carboxylase (AccC) and two subunits each of ACCase subunit alpha (AccA) and ACCase subunit beta (AccD). The cofactor is Zn(2+).

The protein localises to the cytoplasm. It carries out the reaction N(6)-carboxybiotinyl-L-lysyl-[protein] + acetyl-CoA = N(6)-biotinyl-L-lysyl-[protein] + malonyl-CoA. The protein operates within lipid metabolism; malonyl-CoA biosynthesis; malonyl-CoA from acetyl-CoA: step 1/1. Its function is as follows. Component of the acetyl coenzyme A carboxylase (ACC) complex. Biotin carboxylase (BC) catalyzes the carboxylation of biotin on its carrier protein (BCCP) and then the CO(2) group is transferred by the transcarboxylase to acetyl-CoA to form malonyl-CoA. This Blochmanniella pennsylvanica (strain BPEN) protein is Acetyl-coenzyme A carboxylase carboxyl transferase subunit beta.